Reading from the N-terminus, the 372-residue chain is L-selectin (372 aa).

The N-terminal stretch at 1–28 is a signal peptide; it reads MIFPWKCQSTQRDLWNIFKLWGWTMLCC. A propeptide spanning residues 29–38 is cleaved from the precursor; it reads DFLAHHGTDC. Topologically, residues 39 to 332 are extracellular; sequence WTYHYSEKPM…FSMIKEGDYN (294 aa). The C-type lectin domain maps to 55–155; it reads RFCRDNYTDL…ACHKLKAALC (101 aa). 9 disulfide bridges follow: Cys-57–Cys-155, Cys-128–Cys-147, Cys-160–Cys-171, Cys-165–Cys-180, Cys-182–Cys-191, Cys-197–Cys-241, Cys-227–Cys-254, Cys-259–Cys-303, and Cys-289–Cys-316. Asn-60 and Asn-104 each carry an N-linked (GlcNAc...) asparagine glycan. Ca(2+) is bound by residues Glu-118, Asn-120, Glu-126, Asn-143, and Asp-144. The EGF-like domain maps to 156-192; that stretch reads YTASCQPWSCSGHGECVEIINNYTCNCDVGYYGPQCQ. A glycan (N-linked (GlcNAc...) asparagine) is linked at Asn-177. 2 Sushi domains span residues 195–256 and 257–318; these read IQCE…TCQV and IQCE…ICQK. N-linked (GlcNAc...) asparagine glycosylation is found at Asn-232, Asn-246, and Asn-271. A helical transmembrane segment spans residues 333 to 355; that stretch reads PLFIPVAVMVTAFSGLAFIIWLA. At 356–372 the chain is on the cytoplasmic side; that stretch reads RRLKKGKKSKRSMNDPY.

The protein belongs to the selectin/LECAM family. Interaction with SELPLG/PSGL1 and PODXL2 is required for promoting recruitment and rolling of leukocytes. This interaction is dependent on the sialyl Lewis X glycan modification of SELPLG and PODXL2, and tyrosine sulfation modifications of SELPLG. Sulfation on 'Tyr-51' of SELPLG is important for L-selectin binding. In terms of processing, N-glycosylated. As to expression, expressed in B-cell lines and T-lymphocytes.

It is found in the cell membrane. Its function is as follows. Calcium-dependent lectin that mediates cell adhesion by binding to glycoproteins on neighboring cells. Mediates the adherence of lymphocytes to endothelial cells of high endothelial venules in peripheral lymph nodes. Promotes initial tethering and rolling of leukocytes in endothelia. This is L-selectin (SELL) from Homo sapiens (Human).